Reading from the N-terminus, the 371-residue chain is DNA replication and repair protein RecF (371 aa).

Position 30–37 (30–37 (GPNAQGKT)) interacts with ATP.

The protein belongs to the RecF family.

The protein resides in the cytoplasm. In terms of biological role, the RecF protein is involved in DNA metabolism; it is required for DNA replication and normal SOS inducibility. RecF binds preferentially to single-stranded, linear DNA. It also seems to bind ATP. The chain is DNA replication and repair protein RecF from Desulforamulus reducens (strain ATCC BAA-1160 / DSM 100696 / MI-1) (Desulfotomaculum reducens).